A 268-amino-acid chain; its full sequence is Dioscorin DB3S (268 aa).

An Alpha-carbonic anhydrase domain is found at Asp25–Glu259. Cysteines 50 and 209 form a disulfide. The active-site Proton acceptor is His91. L-ascorbate-binding positions include Asp92, His117–His119, Gln136, and Thr205–Ala206.

It belongs to the alpha-class carbonic anhydrase family. In terms of assembly, monomer. Homodimer. Not glycosylated. Expressed in tuber (at protein level).

It catalyses the reaction hydrogencarbonate + H(+) = CO2 + H2O. It carries out the reaction 2 monodehydro-L-ascorbate radical + NADH + H(+) = 2 L-ascorbate + NAD(+). In terms of biological role, storage protein of tuber. Involved in protection against oxidative stress. Has carbonate dehydratase and weak trypsin inhibitor activity detected by measuring the dehydration of sodium bicarbonate and the inhibition of trypsin-catalyzed hydrolysis of N-benzoyl-L-arginine-4-nitro anilide, respectively. Contrarily, no carbonate dehydratase or trypsin inhibitor activity detected by measuring the hydrolysis of 4-nitrophenyl acetate or the inhibition of bovine trypsin-catalyzed hydrolysis of N-benzoyl-L-arginine ethyl ester, respectively. Has dehydroascorbate (DHA) reductase and monodehydroascorbate (MDA) reductase activities. Catalyzes the reactions of carbonate dehydratase and DHA reductase independently of zinc and glutathione (GSH). The coupled reaction is capable of recycling a plant antioxidant ascorbate using ubiquitous compounds H(2)O and CO(2). Exhibits antioxidant activity. Able to scavenge 1,1-diphenyl-2-picrylhydrazyl (DPPH) radical and hydroxyl radicals. Exhibits immunomodulatory activity. Activates Toll-like receptor 4 signaling pathways by up-regulating the gene expression of pro-inflammatory cytokines, such as tumor necrosis factor alpha, interleukin-1 beta and interleukin-6, and chemokines RANTES and MCP-1, in mouse RAW 264.7 macrophages. Stimulates the phagocytosis of E.coli by the LPS-treated mouse macrophages. This chain is Dioscorin DB3S, found in Dioscorea polystachya (Chinese yam).